The primary structure comprises 524 residues: Ribonuclease Y (524 aa).

Residues 3–23 (IVINLFLIIFASVVFFAAGFF) traverse the membrane as a helical segment. Positions 214-274 (ALSVVHIQSD…LRREHAKLTL (61 aa)) constitute a KH domain. An HD domain is found at 340-432 (LLQHSREVAM…VDAANVISLA (93 aa)).

Belongs to the RNase Y family.

The protein resides in the cell membrane. Endoribonuclease that initiates mRNA decay. The chain is Ribonuclease Y from Chlorobium luteolum (strain DSM 273 / BCRC 81028 / 2530) (Pelodictyon luteolum).